An 892-amino-acid chain; its full sequence is Translation initiation factor IF-2 (892 aa).

Disordered stretches follow at residues 144-176 and 189-298; these read QQRL…QKTE and SNSV…SGAH. The span at 207–219 shows a compositional bias: low complexity; the sequence is LPRTVRPTPAARP. Residues 391 to 560 enclose the tr-type G domain; sequence PRPPVVTIMG…SIQAEVLELK (170 aa). Residues 400–407, 446–450, and 500–503 each bind GTP; these read GHVDHGKT, DTPGH, and SKID.

Belongs to the TRAFAC class translation factor GTPase superfamily. Classic translation factor GTPase family. IF-2 subfamily.

The protein localises to the cytoplasm. Functionally, one of the essential components for the initiation of protein synthesis. Protects formylmethionyl-tRNA from spontaneous hydrolysis and promotes its binding to the 30S ribosomal subunits. Also involved in the hydrolysis of GTP during the formation of the 70S ribosomal complex. The chain is Translation initiation factor IF-2 from Xylella fastidiosa (strain M12).